The chain runs to 555 residues: Dihydroxy-acid dehydratase (555 aa).

Position 80 (Asp-80) interacts with Mg(2+). Cys-121 is a binding site for [2Fe-2S] cluster. Mg(2+) is bound by residues Asp-122 and Lys-123. The residue at position 123 (Lys-123) is an N6-carboxylysine. Cys-193 is a binding site for [2Fe-2S] cluster. Glu-444 provides a ligand contact to Mg(2+). The active-site Proton acceptor is the Ser-470.

The protein belongs to the IlvD/Edd family. As to quaternary structure, homodimer. Requires [2Fe-2S] cluster as cofactor. The cofactor is Mg(2+).

The catalysed reaction is (2R)-2,3-dihydroxy-3-methylbutanoate = 3-methyl-2-oxobutanoate + H2O. The enzyme catalyses (2R,3R)-2,3-dihydroxy-3-methylpentanoate = (S)-3-methyl-2-oxopentanoate + H2O. It functions in the pathway amino-acid biosynthesis; L-isoleucine biosynthesis; L-isoleucine from 2-oxobutanoate: step 3/4. The protein operates within amino-acid biosynthesis; L-valine biosynthesis; L-valine from pyruvate: step 3/4. Functions in the biosynthesis of branched-chain amino acids. Catalyzes the dehydration of (2R,3R)-2,3-dihydroxy-3-methylpentanoate (2,3-dihydroxy-3-methylvalerate) into 2-oxo-3-methylpentanoate (2-oxo-3-methylvalerate) and of (2R)-2,3-dihydroxy-3-methylbutanoate (2,3-dihydroxyisovalerate) into 2-oxo-3-methylbutanoate (2-oxoisovalerate), the penultimate precursor to L-isoleucine and L-valine, respectively. This chain is Dihydroxy-acid dehydratase, found in Aquifex aeolicus (strain VF5).